Consider the following 81-residue polypeptide: A-kinase anchor protein 7 isoform alpha (81 aa).

A lipid anchor (N-myristoyl glycine) is attached at Gly2. The tract at residues 2 to 11 is required for membrane localization; the sequence is GQLCCFPFAR. S-palmitoyl cysteine attachment occurs at residues Cys5 and Cys6. The interval 29 to 42 is RII-binding; the sequence is LVRLSKRLVENAVL. The segment at 49-81 is disordered; the sequence is LEETQNKKQPGEGNSTKAEEGDRNGDGSDNNRK. Over residues 65 to 81 the composition is skewed to basic and acidic residues; the sequence is KAEEGDRNGDGSDNNRK.

Binds cAMP-dependent protein kinase (PKA). Interacts with PRKCA; only the cytoplasmic form is capable of interacting with PRKCA.

It is found in the lateral cell membrane. Functionally, targets the cAMP-dependent protein kinase (PKA) to the plasma membrane, and permits functional coupling to the L-type calcium channel. The membrane-associated form reduces epithelial sodium channel (ENaC) activity, whereas the free cytoplasmic form may negatively regulate ENaC channel feedback inhibition by intracellular sodium. In Mus musculus (Mouse), this protein is A-kinase anchor protein 7 isoform alpha (Akap7).